The chain runs to 386 residues: Methionine aminopeptidase 1 (386 aa).

Residue Ala-2 is modified to N-acetylalanine. A C6H2-type zinc finger spans residues 6–59 (TRVCETDGCSSEAKLQCPTCIKLGIQGSYFCSQECFKGSWATHKLLHKKAKDEK). Residues Cys-9, Cys-14, Cys-22, Cys-25, Cys-36, Cys-40, His-48, His-52, and Lys-53 each contribute to the Zn(2+) site. His-203 is an a protein binding site. Residues Asp-220, Asp-231, and His-294 each contribute to the Zn(2+) site. Residue His-301 coordinates a protein. 2 residues coordinate Zn(2+): Glu-327 and Glu-358.

The protein belongs to the peptidase M24A family. Methionine aminopeptidase type 1 subfamily. As to quaternary structure, associates with the 60S ribosomal subunit of the 80S translational complex. Requires Zn(2+) as cofactor. Co(2+) serves as cofactor. It depends on Mn(2+) as a cofactor. Fe(2+) is required as a cofactor.

The protein localises to the cytoplasm. It catalyses the reaction Release of N-terminal amino acids, preferentially methionine, from peptides and arylamides.. Cotranslationally removes the N-terminal methionine from nascent proteins. The N-terminal methionine is often cleaved when the second residue in the primary sequence is small and uncharged (Met-Ala-, Cys, Gly, Pro, Ser, Thr, or Val). This Mus musculus (Mouse) protein is Methionine aminopeptidase 1 (Metap1).